Here is a 499-residue protein sequence, read N- to C-terminus: Potassium voltage-gated channel subfamily A member 2 (499 aa).

The interval 1-26 (MTVATGDPVDEAAALPGHPQDTYDPE) is disordered. Positions 1–125 (MTVATGDPVD…YELGEEAMEM (125 aa)) are tetramerization domain. The Cytoplasmic portion of the chain corresponds to 1 to 160 (MTVATGDPVD…LLFEYPESSG (160 aa)). A helical membrane pass occupies residues 161-182 (PARIIAIVSVMVILISIVSFCL). Topologically, residues 183–221 (ETLPIFRDENEDMHGGGVTFHTYSNSTIGYQQSTSFTDP) are extracellular. Asn207 is a glycosylation site (N-linked (GlcNAc...) asparagine). A helical membrane pass occupies residues 222–243 (FFIVETLCIIWFSFEFLVRFFA). Cys244 carries S-palmitoyl cysteine lipidation. Over 244–254 (CPSKAGFFTNI) the chain is Cytoplasmic. Residues 255–275 (MNIIDIVAIIPYFITLGTELA) traverse the membrane as a helical segment. Residues 276–289 (EKPEDAQQGQQAMS) lie on the Extracellular side of the membrane. The chain crosses the membrane as a helical; Voltage-sensor span at residues 290 to 310 (LAILRVIRLVRVFRIFKLSRH). At 311–325 (SKGLQILGQTLKASM) the chain is on the cytoplasmic side. The segment at 312–325 (KGLQILGQTLKASM) is S4-S5 linker. Residues 326 to 347 (RELGLLIFFLFIGVILFSSAVY) traverse the membrane as a helical segment. Over 348 to 361 (FAEADERDSQFPSI) the chain is Extracellular. Residues 362-373 (PDAFWWAVVSMT) constitute an intramembrane region (helical). Residues 374–379 (TVGYGD) carry the Selectivity filter motif. Residues 374–381 (TVGYGDMV) lie within the membrane without spanning it. The Extracellular portion of the chain corresponds to 382–388 (PTTIGGK). A helical transmembrane segment spans residues 389–417 (IVGSLCAIAGVLTIALPVPVIVSNFNYFY). Residues 418–499 (HRETEGEEQA…VNITKMLTDV (82 aa)) are Cytoplasmic-facing. Tyr429 carries the post-translational modification Phosphotyrosine. Phosphoserine is present on residues Ser434, Ser440, Ser441, and Ser449. A Phosphotyrosine modification is found at Tyr458. Ser468 carries the post-translational modification Phosphoserine. The PDZ-binding motif lies at 497 to 499 (TDV).

The protein belongs to the potassium channel family. A (Shaker) (TC 1.A.1.2) subfamily. Kv1.2/KCNA2 sub-subfamily. As to quaternary structure, homotetramer and heterotetramer with other channel-forming alpha subunits, such as KCNA1, KCNA4, KCNA5, KCNA6 and KCNA7. Channel activity is regulated by interaction with beta subunits, including KCNAB1 and KCNAB2. Identified in a complex with KCNA1 and KCNAB2. Identified in a complex with KCNA5 and KCNAB1. Identified in a complex with KCNA4 and FYN. Interacts with PTK2B. Interacts (via C-terminus) with CTTN. Interacts with ADAM22. Interacts with CNTNAP2. Interacts (via C-terminus) with the PDZ domains of DLG1, DLG2 and DLG4. Interacts (via N-terminal cytoplasmic domain) with RHOA (GTP-bound form); this regulates channel activity by reducing location at the cell surface in response to CHRM1 activation. Interacts with DRD2. Interacts with SIGMAR1; cocaine consumption leads to increased interaction. Interacts with ADAM11. Interacts with LYNX1. Phosphorylated on tyrosine residues; phosphorylation increases in response to ischemia. Phosphorylated on tyrosine residues by activated PTK2B/PYK2. Phosphorylation on tyrosine residues suppresses ion channel activity. Phosphorylated on tyrosine residues in response to CHRM1 activation; this abolishes interaction with CTTN. This is probably due to endocytosis of the phosphorylated channel subunits. Phosphorylated on serine residues in response to increased cAMP levels; phosphorylation is apparently not catalyzed by PKA. In terms of processing, N-glycosylated, with complex, sialylated N-glycans. As to expression, detected in brain. Detected in cerebellum. Detected in mitral cells in the olfactory bulb. Detected in cochlea. Detected in cerebellum, particularly in the basket cell axon plexus and in the terminal regions around Purkinje cells (at protein level). Detected in juxtaparanodal regions in sciatic nerve. Detected in Schwann cells from sciatic nerve. Detected in dopamine neurons in substantia nigra. Detected in large myelinated fibers in juxtaparanodes in the CA3 and CA1 areas of the hippocampus. Detected in brain, in punctae on fiber tracts in brain stem and spinal cord, and on axons in the juxtaparanodal regions of the node of Ranvier (at protein level). Detected in dopamine neurons in the midbrain.

The protein localises to the cell membrane. The protein resides in the membrane. It localises to the cell projection. It is found in the axon. Its subcellular location is the synapse. The protein localises to the endoplasmic reticulum membrane. The protein resides in the lamellipodium membrane. It localises to the synaptosome. It is found in the presynaptic cell membrane. Its subcellular location is the dendrite. The protein localises to the perikaryon. The protein resides in the cell junction. It localises to the paranodal septate junction. The enzyme catalyses K(+)(in) = K(+)(out). Its activity is regulated as follows. Inhibited by 4-aminopyridine (4-AP), dendrotoxin (DTX) and charybdotoxin (CTX), but not by tetraethylammonium (TEA). Inhibited by tityustoxin-K alpha (TsTX-Kalpha), a toxin that is highly specific for KCNA2. Inhibited by maurotoxin. Inhibited by kappaM conotoxins kappaM-RIIIJ and kappaM-RIIIK. Functionally, voltage-gated potassium channel that mediates transmembrane potassium transport in excitable membranes, primarily in the brain and the central nervous system, but also in the cardiovascular system. Prevents aberrant action potential firing and regulates neuronal output. Forms tetrameric potassium-selective channels through which potassium ions pass in accordance with their electrochemical gradient. The channel alternates between opened and closed conformations in response to the voltage difference across the membrane. Can form functional homotetrameric channels and heterotetrameric channels that contain variable proportions of KCNA1, KCNA2, KCNA4, KCNA5, KCNA6, KCNA7, and possibly other family members as well; channel properties depend on the type of alpha subunits that are part of the channel. Channel properties are modulated by cytoplasmic beta subunits that regulate the subcellular location of the alpha subunits and promote rapid inactivation of delayed rectifier potassium channels. In vivo, membranes probably contain a mixture of heteromeric potassium channel complexes, making it difficult to assign currents observed in intact tissues to any particular potassium channel family member. Homotetrameric KCNA2 forms a delayed-rectifier potassium channel that opens in response to membrane depolarization, followed by slow spontaneous channel closure. In contrast, a heteromultimer formed by KCNA2 and KCNA4 shows rapid inactivation. Contributes to the regulation of action potentials in neurons. KCNA2-containing channels play a presynaptic role and prevent hyperexcitability and aberrant action potential firing. Response to toxins that are selective for KCNA1, respectively for KCNA2, suggests that heteromeric potassium channels composed of both KCNA1 and KCNA2 play a role in pacemaking and regulate the output of deep cerebellar nuclear neurons. Response to toxins that are selective for KCNA2-containing potassium channels suggests that in Purkinje cells, dendritic subthreshold KCNA2-containing potassium channels prevent random spontaneous calcium spikes, suppressing dendritic hyperexcitability without hindering the generation of somatic action potentials, and thereby play an important role in motor coordination. KCNA2-containing channels play a role in GABAergic transmission from basket cells to Purkinje cells in the cerebellum, and thereby play an import role in motor coordination. Plays a role in the induction of long-term potentiation of neuron excitability in the CA3 layer of the hippocampus. May function as down-stream effector for G protein-coupled receptors and inhibit GABAergic inputs to basolateral amygdala neurons. May contribute to the regulation of neurotransmitter release, such as gamma-aminobutyric acid (GABA). Contributes to the regulation of the axonal release of the neurotransmitter dopamine. Reduced KCNA2 expression plays a role in the perception of neuropathic pain after peripheral nerve injury, but not acute pain. Plays a role in the regulation of the time spent in non-rapid eye movement (NREM) sleep. This is Potassium voltage-gated channel subfamily A member 2 (Kcna2) from Mus musculus (Mouse).